A 154-amino-acid chain; its full sequence is SsrA-binding protein (154 aa).

It belongs to the SmpB family.

Its subcellular location is the cytoplasm. Functionally, required for rescue of stalled ribosomes mediated by trans-translation. Binds to transfer-messenger RNA (tmRNA), required for stable association of tmRNA with ribosomes. tmRNA and SmpB together mimic tRNA shape, replacing the anticodon stem-loop with SmpB. tmRNA is encoded by the ssrA gene; the 2 termini fold to resemble tRNA(Ala) and it encodes a 'tag peptide', a short internal open reading frame. During trans-translation Ala-aminoacylated tmRNA acts like a tRNA, entering the A-site of stalled ribosomes, displacing the stalled mRNA. The ribosome then switches to translate the ORF on the tmRNA; the nascent peptide is terminated with the 'tag peptide' encoded by the tmRNA and targeted for degradation. The ribosome is freed to recommence translation, which seems to be the essential function of trans-translation. This chain is SsrA-binding protein, found in Ruminiclostridium cellulolyticum (strain ATCC 35319 / DSM 5812 / JCM 6584 / H10) (Clostridium cellulolyticum).